The primary structure comprises 79 residues: Small ribosomal subunit protein bS18B (79 aa).

It belongs to the bacterial ribosomal protein bS18 family. Part of the 30S ribosomal subunit. Forms a tight heterodimer with protein bS6.

Its function is as follows. Binds as a heterodimer with protein bS6 to the central domain of the 16S rRNA, where it helps stabilize the platform of the 30S subunit. The sequence is that of Small ribosomal subunit protein bS18B from Saccharopolyspora erythraea (strain ATCC 11635 / DSM 40517 / JCM 4748 / NBRC 13426 / NCIMB 8594 / NRRL 2338).